The primary structure comprises 395 residues: Probable hercynylcysteine sulfoxide lyase (395 aa).

Positions 1–21 are disordered; sequence MQDEAMRRSGANSPAGDSLAD. Residue Lys220 is modified to N6-(pyridoxal phosphate)lysine.

This sequence belongs to the class-V pyridoxal-phosphate-dependent aminotransferase family. EgtE subfamily. Pyridoxal 5'-phosphate serves as cofactor.

The enzyme catalyses S-(hercyn-2-yl)-L-cysteine S-oxide + AH2 + H(+) = ergothioneine + pyruvate + A + NH4(+). It functions in the pathway amino-acid biosynthesis; ergothioneine biosynthesis. In terms of biological role, probably catalyzes the conversion of hercynylcysteine sulfoxide to ergothioneine. ERG is one of the major redox buffers which protects bacteria against redox stressors and antibiotics; loss of ERG or mycothiol (MSH, the other major redox buffer in this bacteria) leads to respiratory alterations and bioenergetic deficiencies that negatively impact virulence. This is Probable hercynylcysteine sulfoxide lyase from Mycobacterium tuberculosis (strain CDC 1551 / Oshkosh).